A 134-amino-acid chain; its full sequence is Ribonuclease P protein component (134 aa).

This sequence belongs to the RnpA family. As to quaternary structure, consists of a catalytic RNA component (M1 or rnpB) and a protein subunit.

It catalyses the reaction Endonucleolytic cleavage of RNA, removing 5'-extranucleotides from tRNA precursor.. Functionally, RNaseP catalyzes the removal of the 5'-leader sequence from pre-tRNA to produce the mature 5'-terminus. It can also cleave other RNA substrates such as 4.5S RNA. The protein component plays an auxiliary but essential role in vivo by binding to the 5'-leader sequence and broadening the substrate specificity of the ribozyme. This Ectopseudomonas mendocina (strain ymp) (Pseudomonas mendocina) protein is Ribonuclease P protein component.